Consider the following 135-residue polypeptide: Protein E6 (135 aa).

2 zinc fingers span residues 11–47 (CIWC…CTSC) and 83–119 (CMYC…CYLC).

This sequence belongs to the papillomaviridae E6 protein family. In terms of assembly, forms homodimers. Interacts with ubiquitin-protein ligase UBE3A/E6-AP; this interaction stimulates UBE3A ubiquitin activity. Interacts with host BAK1.

It is found in the host cytoplasm. Its subcellular location is the host nucleus. Its function is as follows. Plays a major role in the induction and maintenance of cellular transformation. E6 associates with host UBE3A/E6-AP ubiquitin-protein ligase and modulates its activity. Protects host keratinocytes from apoptosis by mediating the degradation of host BAK1. May also inhibit host immune response. This is Protein E6 from Cervus elaphus (Red deer).